The chain runs to 171 residues: Glutathione peroxidase-like peroxiredoxin GPX3 (171 aa).

Cys43 (cysteine sulfenic acid (-SOH) intermediate) is an active-site residue. Cys43 and Cys89 form a disulfide bridge.

The protein belongs to the glutathione peroxidase family. Interacts with CAP1 and probably YBP1.

It catalyses the reaction a hydroperoxide + [thioredoxin]-dithiol = an alcohol + [thioredoxin]-disulfide + H2O. In terms of biological role, involved in oxidative stress response and redox homeostasis. Functions as a sensor and transducer of hydroperoxide stress. In response to hydroperoxide stress it oxidizes (activates) the transcription activator CAP1, which is involved in transcription activation of genes of the oxidative stress response pathway. May also play a direct role in hydroperoxide scavenging. The enzyme is not required for the glutaredoxin-mediated antioxidant function. In the presence of peroxides, GPX3 is directly oxidized at Cys-43 to form a cysteine sulfenic acid (-SOH). Cys-43-SOH then forms either an intramolecular disulfide bond (Cys-43 with Cys-89) or a transient, intermolecular disulfide bond with 'Cys-446' of CAP1, which is further resolved into a CAP1 intramolecular disulfide bond ('Cys-303' with 'Cys-598'), which causes its nuclear accumulation and activation, and a reduced Cys-43 in GPX3. Required for C.albicans-mediated macrophage killing. This is Glutathione peroxidase-like peroxiredoxin GPX3 from Candida albicans (strain SC5314 / ATCC MYA-2876) (Yeast).